The sequence spans 287 residues: MAKGIREIRRSIKSKKDMRQITKAMKMVAAAKLRRNQDKAEAARPYADKIQEVIASIASGTSGSKHPMLQNRPVKKTGYIVITSDRGLAGGYNANILRKVVNTINEKHKSKDEYGIFVIGRKGRDFFSKRNYPLLDEVTGLPTSPAFADIKKIAGAAVQMFENEQIDELYLCYNKFQSAISQIPTVKQLLPLEAPESNNARAINYEYEPSSEEVLADLLPKYAETLVYSALLEAKASEEGSRMTAMGNATDNATDMINRLTLSYNRARQAAITQEISEIVAGANAQA.

The protein belongs to the ATPase gamma chain family. F-type ATPases have 2 components, CF(1) - the catalytic core - and CF(0) - the membrane proton channel. CF(1) has five subunits: alpha(3), beta(3), gamma(1), delta(1), epsilon(1). CF(0) has three main subunits: a, b and c.

The protein resides in the cell membrane. Produces ATP from ADP in the presence of a proton gradient across the membrane. The gamma chain is believed to be important in regulating ATPase activity and the flow of protons through the CF(0) complex. The protein is ATP synthase gamma chain of Brevibacillus brevis (strain 47 / JCM 6285 / NBRC 100599).